Here is a 142-residue protein sequence, read N- to C-terminus: Large ribosomal subunit protein uL13 (142 aa).

This sequence belongs to the universal ribosomal protein uL13 family. In terms of assembly, part of the 50S ribosomal subunit.

Functionally, this protein is one of the early assembly proteins of the 50S ribosomal subunit, although it is not seen to bind rRNA by itself. It is important during the early stages of 50S assembly. The chain is Large ribosomal subunit protein uL13 from Acinetobacter baumannii (strain AB0057).